Here is a 564-residue protein sequence, read N- to C-terminus: Nucleoprotein (564 aa).

A binding site for the cap structure m7GTP region spans residues 54–236; it reads LRKNKRGEED…VTKDESSINI (183 aa). Mn(2+) is bound by residues Asp380 and Glu382. Zn(2+)-binding residues include Glu390, Cys497, His500, and Cys525. Asp529 is a Mn(2+) binding site.

Belongs to the arenaviridae nucleocapsid protein family. As to quaternary structure, homomultimerizes to form the nucleocapsid. Binds to viral genomic RNA. Interacts with glycoprotein G2. Interacts with protein Z; this interaction probably directs the encapsidated genome to budding sites. Interacts with protein L; this interaction does not interfere with Z-L interaction. Interacts with host IKBKE (via Protein kinase domain); the interaction inhibits IKBKE kinase activity.

It localises to the virion. The protein resides in the host cytoplasm. Functionally, encapsidates the genome, protecting it from nucleases. The encapsidated genomic RNA is termed the nucleocapsid (NC). Serves as template for viral transcription and replication. The increased presence of protein N in host cell does not seem to trigger the switch from transcription to replication as observed in other negative strain RNA viruses. Through the interaction with host IKBKE, strongly inhibits the phosphorylation and nuclear translocation of host IRF3, a protein involved in interferon activation pathway, leading to the inhibition of interferon-beta and IRF3-dependent promoters activation. Also encodes a functional 3'-5' exoribonuclease that degrades preferentially dsRNA substrates and thereby participates in the suppression of interferon induction. In Calomys callosus (Large vesper mouse), this protein is Nucleoprotein.